The chain runs to 310 residues: p-hydroxybenzoic acid efflux pump subunit AaeA (310 aa).

The helical transmembrane segment at 12–32 threads the bilayer; sequence AITVVLVILAFIAIFNAWVYY.

The protein belongs to the membrane fusion protein (MFP) (TC 8.A.1) family.

The protein resides in the cell inner membrane. Functionally, forms an efflux pump with AaeB. This chain is p-hydroxybenzoic acid efflux pump subunit AaeA, found in Escherichia coli O9:H4 (strain HS).